Reading from the N-terminus, the 172-residue chain is MARGINKVILVGNLGNDPDTKYTQAGMAITRVSLATTSMRKDREGNNQERTEWHRVVFFGKLGEIAGEYLRKGSQVYVEGELRYDKYTGQDGVEKYSTDIVANEMQMLGGRGEGGGGGGMGGDRPQRTQAPRQQQGGGGGGGGQDYAPRRQQPAQQQSAPPMDDFADDDIPF.

One can recognise an SSB domain in the interval 5 to 109 (INKVILVGNL…IVANEMQMLG (105 aa)). Positions 107 to 172 (MLGGRGEGGG…DDFADDDIPF (66 aa)) are disordered. Gly residues-rich tracts occupy residues 109–122 (GGRGEGGGGGGMGG) and 135–144 (QGGGGGGGGQ). Residues 149–161 (RRQQPAQQQSAPP) are compositionally biased toward low complexity. An Important for interaction with partner proteins motif is present at residues 167–172 (DDDIPF).

Homotetramer.

In terms of biological role, plays an important role in DNA replication, recombination and repair. Binds to ssDNA and to an array of partner proteins to recruit them to their sites of action during DNA metabolism. The polypeptide is Single-stranded DNA-binding protein (ssb) (Xanthomonas campestris pv. campestris (strain ATCC 33913 / DSM 3586 / NCPPB 528 / LMG 568 / P 25)).